A 107-amino-acid chain; its full sequence is Protein Asterix (107 aa).

Over residues 1 to 15 (MSHSHGNASSVNDPR) the composition is skewed to polar residues. A disordered region spans residues 1–25 (MSHSHGNASSVNDPRQPSAAKPYIP). The chain crosses the membrane as a helical span at residues 82–98 (ISMAMMFAIMGLVTNYL).

This sequence belongs to the Asterix family.

The protein resides in the membrane. The polypeptide is Protein Asterix (Arabidopsis thaliana (Mouse-ear cress)).